The chain runs to 730 residues: Meiotically up-regulated gene 70 protein (730 aa).

The disordered stretch occupies residues 1–27; sequence MTVGTLSVVSSTASDTASHVSDTRKRQ. The span at 7 to 20 shows a compositional bias: low complexity; sequence SVVSSTASDTASHV. CBS domains are found at residues 69–127, 135–200, 263–319, and 328–385; these read ALDP…LNAR, MSTS…RIAR, SSEE…GLDP, and MTPH…PEEE. The next 2 membrane-spanning stretches (helical) occupy residues 290 to 310 and 358 to 378; these read AVLV…DVVL and VVDE…ATAI. Positions 420 to 517 are disordered; sequence ENYDVNPPLP…ENGSNSFAAS (98 aa). Polar residues-rich tracts occupy residues 458-470 and 480-515; these read AWQN…NNKP and YNFS…NSFA. The PB1 domain occupies 572–649; it reads PSQFTIKYRS…ARRRGLPRLE (78 aa). Residues 706–726 traverse the membrane as a helical segment; the sequence is PIYIGIVSSSIVILAVSMWYL.

It localises to the cytoplasm. Its subcellular location is the nucleus membrane. Has a role in meiosis. The chain is Meiotically up-regulated gene 70 protein (mug70) from Schizosaccharomyces pombe (strain 972 / ATCC 24843) (Fission yeast).